Consider the following 2635-residue polypeptide: Large tegument protein deneddylase (2635 aa).

Positions 1–233 are deubiquitination activity; the sequence is MAAQPLYMEG…LHGPRMDISR (233 aa). The Peptidase C76 domain maps to 9-223; that stretch reads EGMASTHQAN…NHYRTIVFEE (215 aa). Active-site residues include Cys29, Asp159, and His161. Disordered regions lie at residues 243 to 497, 2238 to 2269, 2357 to 2438, and 2500 to 2533; these read ITSP…DRYA, PLTI…QQPK, RTAL…KRAA, and KAGW…DDKS. Over residues 245–255 the composition is skewed to low complexity; it reads SPSVSPAPSEA. 2 stretches are compositionally biased toward basic and acidic residues: residues 256-270 and 282-295; these read PLRR…ETRP and PTDR…DRPP. An interaction with inner tegument protein region spans residues 316–325; that stretch reads KTGRGGNEGR. A compositionally biased stretch (basic and acidic residues) spans 330 to 346; the sequence is PPDEHQPPHITAEHMDQ. Residues 448 to 461 show a composition bias toward low complexity; sequence DDPLTPLYPLTDTP. A compositionally biased stretch (low complexity) spans 2379-2402; it reads TLTFRLPPTAPTPATAALETKTTP. Positions 2425 to 2437 are enriched in basic and acidic residues; sequence HARDTSPPAEKRA.

This sequence belongs to the herpesviridae large tegument protein family. As to quaternary structure, interacts with host CUL1 and CUL4A; these interactions inhibit the E3 ligase activity of cullins. Interacts with inner tegument protein. Interacts with capsid vertex specific component CVC2. Interacts with the major capsid protein/MCP.

It is found in the virion tegument. Its subcellular location is the host cytoplasm. The protein localises to the host nucleus. It catalyses the reaction Thiol-dependent hydrolysis of ester, thioester, amide, peptide and isopeptide bonds formed by the C-terminal Gly of ubiquitin (a 76-residue protein attached to proteins as an intracellular targeting signal).. In terms of biological role, large tegument protein that plays multiple roles in the viral cycle. During viral entry, remains associated with the capsid while most of the tegument is detached and participates in the capsid transport toward the host nucleus. Plays a role in the routing of the capsid at the nuclear pore complex and subsequent uncoating. Within the host nucleus, acts as a deneddylase and promotes the degradation of nuclear CRLs (cullin-RING ubiquitin ligases) and thereby stabilizes nuclear CRL substrates, while cytoplasmic CRLs remain unaffected. These modifications prevent host cell cycle S-phase progression and create a favorable environment allowing efficient viral genome replication. Participates later in the secondary envelopment of capsids. Indeed, plays a linker role for the association of the outer viral tegument to the capsids together with the inner tegument protein. This Homo sapiens (Human) protein is Large tegument protein deneddylase.